The primary structure comprises 293 residues: Diaminopimelate epimerase (293 aa).

The substrate site is built by N17, Q49, and N69. The active-site Proton donor is the C78. Residues 79–80, N169, N203, and 221–222 contribute to the substrate site; these read GN and ER. C230 serves as the catalytic Proton acceptor. 231–232 is a binding site for substrate; it reads GS.

The protein belongs to the diaminopimelate epimerase family. As to quaternary structure, homodimer.

The protein resides in the cytoplasm. It catalyses the reaction (2S,6S)-2,6-diaminopimelate = meso-2,6-diaminopimelate. It functions in the pathway amino-acid biosynthesis; L-lysine biosynthesis via DAP pathway; DL-2,6-diaminopimelate from LL-2,6-diaminopimelate: step 1/1. Functionally, catalyzes the stereoinversion of LL-2,6-diaminopimelate (L,L-DAP) to meso-diaminopimelate (meso-DAP), a precursor of L-lysine and an essential component of the bacterial peptidoglycan. In Methylobacterium sp. (strain 4-46), this protein is Diaminopimelate epimerase.